The chain runs to 282 residues: 4-hydroxy-3-methylbut-2-enyl diphosphate reductase (282 aa).

[4Fe-4S] cluster is bound at residue cysteine 14. Histidine 43 and histidine 78 together coordinate (2E)-4-hydroxy-3-methylbut-2-enyl diphosphate. Dimethylallyl diphosphate-binding residues include histidine 43 and histidine 78. Isopentenyl diphosphate is bound by residues histidine 43 and histidine 78. Cysteine 100 provides a ligand contact to [4Fe-4S] cluster. Histidine 128 is a binding site for (2E)-4-hydroxy-3-methylbut-2-enyl diphosphate. A dimethylallyl diphosphate-binding site is contributed by histidine 128. Position 128 (histidine 128) interacts with isopentenyl diphosphate. Glutamate 130 acts as the Proton donor in catalysis. Threonine 164 provides a ligand contact to (2E)-4-hydroxy-3-methylbut-2-enyl diphosphate. Position 192 (cysteine 192) interacts with [4Fe-4S] cluster. Serine 220, serine 221, asparagine 222, and serine 266 together coordinate (2E)-4-hydroxy-3-methylbut-2-enyl diphosphate. The dimethylallyl diphosphate site is built by serine 220, serine 221, asparagine 222, and serine 266. Residues serine 220, serine 221, asparagine 222, and serine 266 each contribute to the isopentenyl diphosphate site.

Belongs to the IspH family. Requires [4Fe-4S] cluster as cofactor.

The catalysed reaction is isopentenyl diphosphate + 2 oxidized [2Fe-2S]-[ferredoxin] + H2O = (2E)-4-hydroxy-3-methylbut-2-enyl diphosphate + 2 reduced [2Fe-2S]-[ferredoxin] + 2 H(+). The enzyme catalyses dimethylallyl diphosphate + 2 oxidized [2Fe-2S]-[ferredoxin] + H2O = (2E)-4-hydroxy-3-methylbut-2-enyl diphosphate + 2 reduced [2Fe-2S]-[ferredoxin] + 2 H(+). It functions in the pathway isoprenoid biosynthesis; dimethylallyl diphosphate biosynthesis; dimethylallyl diphosphate from (2E)-4-hydroxy-3-methylbutenyl diphosphate: step 1/1. Its pathway is isoprenoid biosynthesis; isopentenyl diphosphate biosynthesis via DXP pathway; isopentenyl diphosphate from 1-deoxy-D-xylulose 5-phosphate: step 6/6. In terms of biological role, catalyzes the conversion of 1-hydroxy-2-methyl-2-(E)-butenyl 4-diphosphate (HMBPP) into a mixture of isopentenyl diphosphate (IPP) and dimethylallyl diphosphate (DMAPP). Acts in the terminal step of the DOXP/MEP pathway for isoprenoid precursor biosynthesis. The protein is 4-hydroxy-3-methylbut-2-enyl diphosphate reductase of Clostridium perfringens (strain 13 / Type A).